A 640-amino-acid polypeptide reads, in one-letter code: Chaperone protein DnaK (640 aa).

T199 is subject to Phosphothreonine; by autocatalysis. Over residues 606 to 621 the composition is skewed to low complexity; sequence QQAAGAGAQQADGTGK. Positions 606-640 are disordered; it reads QQAAGAGAQQADGTGKAADDGVVDAEFEEVKEDNK. Residues 626 to 640 are compositionally biased toward acidic residues; that stretch reads GVVDAEFEEVKEDNK.

This sequence belongs to the heat shock protein 70 family.

Its function is as follows. Acts as a chaperone. The chain is Chaperone protein DnaK from Cellvibrio japonicus (strain Ueda107) (Pseudomonas fluorescens subsp. cellulosa).